A 437-amino-acid chain; its full sequence is Probable glycine dehydrogenase (decarboxylating) subunit 1 (437 aa).

The protein belongs to the GcvP family. N-terminal subunit subfamily. In terms of assembly, the glycine cleavage system is composed of four proteins: P, T, L and H. In this organism, the P 'protein' is a heterodimer of two subunits.

The catalysed reaction is N(6)-[(R)-lipoyl]-L-lysyl-[glycine-cleavage complex H protein] + glycine + H(+) = N(6)-[(R)-S(8)-aminomethyldihydrolipoyl]-L-lysyl-[glycine-cleavage complex H protein] + CO2. Its function is as follows. The glycine cleavage system catalyzes the degradation of glycine. The P protein binds the alpha-amino group of glycine through its pyridoxal phosphate cofactor; CO(2) is released and the remaining methylamine moiety is then transferred to the lipoamide cofactor of the H protein. This Thermotoga maritima (strain ATCC 43589 / DSM 3109 / JCM 10099 / NBRC 100826 / MSB8) protein is Probable glycine dehydrogenase (decarboxylating) subunit 1.